The chain runs to 647 residues: Centrosomal protein of 72 kDa (647 aa).

LRR repeat units follow at residues 29–50 (ELQS…GHSL), 55–76 (GLKS…QYLT), and 77–98 (ALES…FRLH). Positions 111–150 (NPVVKVEPDYRLFVVHLLPKLQQLDDRPVRASERKASRLH) constitute an LRRCT domain. Composition is skewed to basic and acidic residues over residues 152–161 (ASEDSLDSKE) and 220–234 (KGRE…ESRH). Disordered regions lie at residues 152–176 (ASED…HHPR), 211–256 (PPGS…RETR), and 285–413 (PEAS…ALPG). S237 is modified (phosphoserine). The span at 366-377 (SLSRQDSSESRN) shows a compositional bias: basic and acidic residues. S382 bears the Phosphoserine mark. Residues 390-402 (EEQRSRGVTDTRE) are compositionally biased toward basic and acidic residues. S404 carries the phosphoserine modification. A coiled-coil region spans residues 476–620 (SLALESKSLQ…AQHRAEVEQM (145 aa)).

It belongs to the CEP72 family. In terms of assembly, interacts with KIZ, PCM1 and CDK5RAP2.

The protein resides in the cytoplasm. It is found in the cytoskeleton. The protein localises to the microtubule organizing center. It localises to the centrosome. Its subcellular location is the centriolar satellite. Its function is as follows. Involved in the recruitment of key centrosomal proteins to the centrosome. Provides centrosomal microtubule-nucleation activity on the gamma-tubulin ring complexes (gamma-TuRCs) and has critical roles in forming a focused bipolar spindle, which is needed for proper tension generation between sister chromatids. Required for localization of KIZ, AKAP9 and gamma-tubulin ring complexes (gamma-TuRCs). Involved in centriole duplication. Required for CDK5RAP22, CEP152, WDR62 and CEP63 centrosomal localization and promotes the centrosomal localization of CDK2. The polypeptide is Centrosomal protein of 72 kDa (CEP72) (Homo sapiens (Human)).